The primary structure comprises 264 residues: uncharacterized protein (264 aa).

Positions 1–26 (MMKKLFHSTLIVLLFFSFFGVQPIHA) are cleaved as a signal peptide.

This is an uncharacterized protein from Bacillus subtilis (strain 168).